Reading from the N-terminus, the 197-residue chain is Xanthine phosphoribosyltransferase (197 aa).

2 residues coordinate xanthine: Leu20 and Asn27. Residue 128-132 (ANGQA) coordinates 5-phospho-alpha-D-ribose 1-diphosphate. Lys156 serves as a coordination point for xanthine.

It belongs to the purine/pyrimidine phosphoribosyltransferase family. Xpt subfamily. In terms of assembly, homodimer.

Its subcellular location is the cytoplasm. It carries out the reaction XMP + diphosphate = xanthine + 5-phospho-alpha-D-ribose 1-diphosphate. It functions in the pathway purine metabolism; XMP biosynthesis via salvage pathway; XMP from xanthine: step 1/1. Converts the preformed base xanthine, a product of nucleic acid breakdown, to xanthosine 5'-monophosphate (XMP), so it can be reused for RNA or DNA synthesis. The chain is Xanthine phosphoribosyltransferase from Bacillus thuringiensis (strain Al Hakam).